A 415-amino-acid polypeptide reads, in one-letter code: Gamma-glutamyl phosphate reductase (415 aa).

This sequence belongs to the gamma-glutamyl phosphate reductase family.

The protein resides in the cytoplasm. It carries out the reaction L-glutamate 5-semialdehyde + phosphate + NADP(+) = L-glutamyl 5-phosphate + NADPH + H(+). It participates in amino-acid biosynthesis; L-proline biosynthesis; L-glutamate 5-semialdehyde from L-glutamate: step 2/2. Its function is as follows. Catalyzes the NADPH-dependent reduction of L-glutamate 5-phosphate into L-glutamate 5-semialdehyde and phosphate. The product spontaneously undergoes cyclization to form 1-pyrroline-5-carboxylate. In Mycolicibacterium vanbaalenii (strain DSM 7251 / JCM 13017 / BCRC 16820 / KCTC 9966 / NRRL B-24157 / PYR-1) (Mycobacterium vanbaalenii), this protein is Gamma-glutamyl phosphate reductase.